Consider the following 420-residue polypeptide: Gamma-glutamyl phosphate reductase (420 aa).

Belongs to the gamma-glutamyl phosphate reductase family.

The protein localises to the cytoplasm. The enzyme catalyses L-glutamate 5-semialdehyde + phosphate + NADP(+) = L-glutamyl 5-phosphate + NADPH + H(+). It participates in amino-acid biosynthesis; L-proline biosynthesis; L-glutamate 5-semialdehyde from L-glutamate: step 2/2. Functionally, catalyzes the NADPH-dependent reduction of L-glutamate 5-phosphate into L-glutamate 5-semialdehyde and phosphate. The product spontaneously undergoes cyclization to form 1-pyrroline-5-carboxylate. This is Gamma-glutamyl phosphate reductase from Streptococcus pneumoniae (strain CGSP14).